A 352-amino-acid polypeptide reads, in one-letter code: Histidinol-phosphate aminotransferase (352 aa).

Lysine 221 bears the N6-(pyridoxal phosphate)lysine mark.

The protein belongs to the class-II pyridoxal-phosphate-dependent aminotransferase family. Histidinol-phosphate aminotransferase subfamily. As to quaternary structure, homodimer. Pyridoxal 5'-phosphate is required as a cofactor.

The enzyme catalyses L-histidinol phosphate + 2-oxoglutarate = 3-(imidazol-4-yl)-2-oxopropyl phosphate + L-glutamate. Its pathway is amino-acid biosynthesis; L-histidine biosynthesis; L-histidine from 5-phospho-alpha-D-ribose 1-diphosphate: step 7/9. The protein is Histidinol-phosphate aminotransferase of Staphylococcus aureus (strain Mu3 / ATCC 700698).